Here is a 130-residue protein sequence, read N- to C-terminus: Phosphoribosyl-AMP cyclohydrolase (130 aa).

Asp-77 contacts Mg(2+). Position 78 (Cys-78) interacts with Zn(2+). Mg(2+) is bound by residues Asp-79 and Asp-81. Zn(2+)-binding residues include Cys-95 and Cys-102.

The protein belongs to the PRA-CH family. In terms of assembly, homodimer. Mg(2+) serves as cofactor. Requires Zn(2+) as cofactor.

It localises to the cytoplasm. The enzyme catalyses 1-(5-phospho-beta-D-ribosyl)-5'-AMP + H2O = 1-(5-phospho-beta-D-ribosyl)-5-[(5-phospho-beta-D-ribosylamino)methylideneamino]imidazole-4-carboxamide. Its pathway is amino-acid biosynthesis; L-histidine biosynthesis; L-histidine from 5-phospho-alpha-D-ribose 1-diphosphate: step 3/9. In terms of biological role, catalyzes the hydrolysis of the adenine ring of phosphoribosyl-AMP. In Pseudomonas syringae pv. syringae (strain B728a), this protein is Phosphoribosyl-AMP cyclohydrolase.